A 565-amino-acid polypeptide reads, in one-letter code: Urocanate hydratase (565 aa).

NAD(+) contacts are provided by residues 61-62, Gln-139, 185-187, Glu-205, Arg-210, 251-252, 272-276, 282-283, and Tyr-331; these read GG, GMG, NA, QTSAH, and YL. Cys-419 is a catalytic residue. A disordered region spans residues 453-472; sequence LDSGSVASPNRETESMRDGS. Basic and acidic residues predominate over residues 463–472; that stretch reads RETESMRDGS. NAD(+) is bound at residue Gly-501.

The protein belongs to the urocanase family. NAD(+) is required as a cofactor.

It is found in the cytoplasm. It carries out the reaction 4-imidazolone-5-propanoate = trans-urocanate + H2O. The protein operates within amino-acid degradation; L-histidine degradation into L-glutamate; N-formimidoyl-L-glutamate from L-histidine: step 2/3. Catalyzes the conversion of urocanate to 4-imidazolone-5-propionate. The protein is Urocanate hydratase of Pseudomonas syringae pv. tomato (strain ATCC BAA-871 / DC3000).